The following is a 219-amino-acid chain: Cytidylate kinase (219 aa).

21-29 (GPAASGKGT) contributes to the ATP binding site.

The protein belongs to the cytidylate kinase family. Type 1 subfamily.

The protein resides in the cytoplasm. It catalyses the reaction CMP + ATP = CDP + ADP. The catalysed reaction is dCMP + ATP = dCDP + ADP. In Rickettsia africae (strain ESF-5), this protein is Cytidylate kinase.